The primary structure comprises 605 residues: MELALVGNPSNGVAKPSCNSVGSLPVVSSNAVINPPVTSAAGATLGRHLARRLVQIGATDVFAVPGDFNLTLLDYLIAEPGLKLIGCCNELNAGYAADGYARARGVGACAVTFTVGGLSVLNAIAGAYSENLPVICIVGGPNSNDYGTNRILHHTIGLPDFSQELRCFQTITCYQAVINNLDDAHEQIDTAIATALRESKPVYISVGCNLAGLSHPTFSREPVPLFISPRLSNKANLEYAVEAAADFLNKAVKPVMVGGPKIRVAKAKKAFAGIAESSGYPFAVMPSAKGLVPEHHPRFIGTYWGAVSTTFCAEIVESADAYLFAGPIFNDYSSVGYSLLLKREKAVIVQPDRVVVGNGPAFGCILMTEFLDALAKRLDRNTTAYDNYRRIFIPDREPPNGQPDEPLRVNILFKHIKEMLSGDTAVIAETGDSWFNCQKLRLPEGCGYEFQMQYGSIGWSVGATLGYAQAAKDKRVISCIGDGSFQMTAQDVSTMLRCGQKSIIFLINNGGYTIEVEIHDGPYNVIKNWDYTGLIDAIHNSDGNCWTKKVRTEEELIEAIATATGAKKDCLCFIEIIVHKDDTSKELLEWGSRVSAANSRPPNPQ.

Asp-67 and His-154 together coordinate substrate. Residues Asp-432–Ile-514 are thiamine pyrophosphate binding. Residues Asp-482, Asn-509, and Gly-511 each contribute to the Mg(2+) site. A substrate-binding site is contributed by Glu-515.

Belongs to the TPP enzyme family. As to quaternary structure, homotetramer. A metal cation is required as a cofactor. The cofactor is thiamine diphosphate.

It carries out the reaction a 2-oxocarboxylate + H(+) = an aldehyde + CO2. The sequence is that of Pyruvate decarboxylase 1 (PDC1) from Oryza sativa subsp. japonica (Rice).